Consider the following 338-residue polypeptide: Phenylalanine--tRNA ligase alpha subunit (338 aa).

Glu-252 serves as a coordination point for Mg(2+).

It belongs to the class-II aminoacyl-tRNA synthetase family. Phe-tRNA synthetase alpha subunit type 1 subfamily. In terms of assembly, tetramer of two alpha and two beta subunits. Mg(2+) is required as a cofactor.

It localises to the cytoplasm. It catalyses the reaction tRNA(Phe) + L-phenylalanine + ATP = L-phenylalanyl-tRNA(Phe) + AMP + diphosphate + H(+). This chain is Phenylalanine--tRNA ligase alpha subunit, found in Pseudomonas aeruginosa (strain UCBPP-PA14).